The following is an 81-amino-acid chain: Putative membrane protein insertion efficiency factor (81 aa).

It belongs to the UPF0161 family.

It localises to the cell inner membrane. In terms of biological role, could be involved in insertion of integral membrane proteins into the membrane. The chain is Putative membrane protein insertion efficiency factor from Legionella pneumophila subsp. pneumophila (strain Philadelphia 1 / ATCC 33152 / DSM 7513).